We begin with the raw amino-acid sequence, 506 residues long: Protein CYCLOPS (506 aa).

2 disordered regions span residues 193–223 and 385–434; these read TVNS…LDNP and KENL…RSST. The segment covering 202–219 has biased composition (low complexity); sequence TPSQTPTFVSPSSSSTSP. Basic and acidic residues predominate over residues 385–394; sequence KENLKDDRKK. The short motif at 415–418 is the Nuclear localization signal element; the sequence is KKRR. Positions 422–432 are enriched in basic and acidic residues; the sequence is SRKMAEAKERS. Residues 441–506 adopt a coiled-coil conformation; the sequence is IQVVLKRCET…IERIVSDTNT (66 aa).

It belongs to the CYCLOPS family. As to expression, highly epressed in roots. Expressed at very low levels in leaves, stems and panicles.

Its subcellular location is the nucleus. In terms of biological role, involved in arbuscular mycorrhizal (AM) symbiosis. Required for fungal infection in roots and arbuscule development during AM symbiosis. The sequence is that of Protein CYCLOPS from Oryza sativa subsp. japonica (Rice).